Here is a 115-residue protein sequence, read N- to C-terminus: Parathyroid hormone (115 aa).

The N-terminal stretch at 1 to 25 (MMSAKDMVKVMIVMLAICFLARSDG) is a signal peptide. The propeptide occupies 26 to 31 (KSVKKR). Residues 51–69 (RVEWLRKKLQDVHNFVALG) are important for receptor binding. Residues 77–99 (GSSQRPRKKEDNVLVESHQKSLG) are disordered. Residues 84–99 (KKEDNVLVESHQKSLG) are compositionally biased toward basic and acidic residues.

The protein belongs to the parathyroid hormone family. As to quaternary structure, interacts with PTH1R (via N-terminal extracellular domain).

It is found in the secreted. In terms of biological role, parathyroid hormone elevates calcium level by dissolving the salts in bone and preventing their renal excretion. Acts by binding to its receptor, PTH1R, activating G protein-coupled receptor signaling. Stimulates [1-14C]-2-deoxy-D-glucose (2DG) transport and glycogen synthesis in osteoblastic cells. The protein is Parathyroid hormone of Bos taurus (Bovine).